A 288-amino-acid chain; its full sequence is NAD kinase (288 aa).

Catalysis depends on aspartate 70, which acts as the Proton acceptor. Residues 70–71, 144–145, arginine 155, lysine 172, aspartate 174, 185–190, and glutamine 245 contribute to the NAD(+) site; these read DG, ND, and TGYSLS.

This sequence belongs to the NAD kinase family. A divalent metal cation serves as cofactor.

It localises to the cytoplasm. It catalyses the reaction NAD(+) + ATP = ADP + NADP(+) + H(+). Functionally, involved in the regulation of the intracellular balance of NAD and NADP, and is a key enzyme in the biosynthesis of NADP. Catalyzes specifically the phosphorylation on 2'-hydroxyl of the adenosine moiety of NAD to yield NADP. The chain is NAD kinase from Citrifermentans bemidjiense (strain ATCC BAA-1014 / DSM 16622 / JCM 12645 / Bem) (Geobacter bemidjiensis).